The chain runs to 575 residues: MNTKGKVVGVNGNLVTIEVEGSVSMNEVLFVKTGGRNLKAEVIRVRGNEVDAQVFELTKGISVGDLVEFTDKLLTVELGPGLLTQVYDGLQNPLPELAIKCGFFLERGVYLRPLNKDKKWNFKKTSKVGDSVIAGDFLGFVIEGTVHHQIMIPFYKRDSYKIVEIVNDGDYSIDEQIAVIEDDSGMRHSITMSFHWPVKIPITNYKQRLIPSEPMLTQTRIIDTFFPVAKGGTFCIPGPFGAGKTVLQQVTSRNADVDIVIIAACGERAGEVVETLKEFPELIDPKTGKSLMDRTCIICNTSSMPVAAREASVYTAITIGEYYRQMGLDILLLADSTSRWAQAMREMSGRLEEIPGEEAFPAYLESVIASFYERAGIVVLNNGDIGSVTVGGSVSPAGGNFEEPVTQATLKVVGAFHGLTRERSDARKFPAISPLESWSKYKGVIDSKKTEYVRSFLVKGNEINQMMKVVGEEGISNEDFLIYLKSELLDSCYLQQNSFDSIDAAVNSERQNYMFDIVYNILKTNFEFSDKLQARDFINELRQNLLDMNLSSFKDSKFNKLEHTLSELVNFKKVI.

Gly-238–Thr-245 contacts ATP.

Belongs to the ATPase alpha/beta chains family.

The catalysed reaction is ATP + H2O + 4 H(+)(in) = ADP + phosphate + 5 H(+)(out). Its function is as follows. Produces ATP from ADP in the presence of a proton gradient across the membrane. The V-type alpha chain is a catalytic subunit. This Borreliella afzelii (strain PKo) (Borrelia afzelii) protein is V-type ATP synthase alpha chain.